We begin with the raw amino-acid sequence, 1564 residues long: ATP-dependent permease PDR10 (1564 aa).

Positions 1–16 are enriched in polar residues; it reads MLQAPSSSNSGLNQGN. The interval 1 to 37 is disordered; sequence MLQAPSSSNSGLNQGNAAPDGPPNETQPYEGLDAAAQ. The Cytoplasmic portion of the chain corresponds to 1-587; the sequence is MLQAPSSSNS…AAIFFAILFN (587 aa). An ABC transporter 1 domain is found at 174 to 430; that stretch reads ISRRLFHRTH…FQRMGYVCPE (257 aa). 5 helical membrane-spanning segments follow: residues 588–608, 624–644, 674–694, 699–719, and 732–752; these read AFSS…TEKH, TFSD…PYYF, RCIG…SVLL, MYTG…WISY, and INEF…GPNY. N-linked (GlcNAc...) asparagine glycosylation occurs at Asn-754. Residues 839 to 849 are compositionally biased toward basic residues; sequence KGIVSEKKKKN. The interval 839–872 is disordered; it reads KGIVSEKKKKNQPTLSTSDAEKDVEMNNNSSATD. Residues 841–861 traverse the membrane as a helical segment; sequence IVSEKKKKNQPTLSTSDAEKD. Topologically, residues 862 to 1304 are cytoplasmic; the sequence is VEMNNNSSAT…IFMFTVVFNP (443 aa). In terms of domain architecture, ABC transporter 2 spans 923–1166; it reads FHWKNLCYDI…MINYFEAHGA (244 aa). 959–966 contacts ATP; that stretch reads GASGAGKT. A run of 6 helical transmembrane segments spans residues 1305–1325, 1340–1360, 1390–1410, 1426–1446, 1459–1479, and 1491–1511; these read ILQQ…ARER, ILVE…VYYY, VYIS…ENAA, VLAT…VSPL, ANAS…PSGM, and STGT…FCQF. At 1512–1564 the chain is on the cytoplasmic side; the sequence is SSTNDYLATVSSSYSRRWMNYGIFSAYIVFDYCAAIFLYWLVRVPKKSKKLKK.

The protein belongs to the ABC transporter superfamily. ABCG family. PDR (TC 3.A.1.205) subfamily.

The protein resides in the membrane. This Saccharomyces cerevisiae (strain ATCC 204508 / S288c) (Baker's yeast) protein is ATP-dependent permease PDR10 (PDR10).